Here is a 348-residue protein sequence, read N- to C-terminus: NADH-ubiquinone oxidoreductase chain 2 (348 aa).

10 consecutive transmembrane segments (helical) span residues 3-23 (PTVLTIIISSMGLGTTLTFIG), 25-45 (HWLLVWMGLEINTLAIIPLMI), 59-79 (YFITQATASALLLFASVTNAW), 95-115 (ATLATAALALKIGLAPLHFWL), 149-171 (LNSNLLLLFGVTSTIVGGWGGLN), 178-198 (ILAYSSIANLGWMITILHYSP), 199-219 (SLTLLNLILYMFMTLTTFLLF), 242-262 (VIALMTLLSLGGLPPLSGFMP), 274-294 (SLIIPATIMALMALLSLFFYL), and 324-344 (LILLTSASISIFMLPMTPLIL).

This sequence belongs to the complex I subunit 2 family.

The protein resides in the mitochondrion inner membrane. It catalyses the reaction a ubiquinone + NADH + 5 H(+)(in) = a ubiquinol + NAD(+) + 4 H(+)(out). Functionally, core subunit of the mitochondrial membrane respiratory chain NADH dehydrogenase (Complex I) that is believed to belong to the minimal assembly required for catalysis. Complex I functions in the transfer of electrons from NADH to the respiratory chain. The immediate electron acceptor for the enzyme is believed to be ubiquinone. This Scyliorhinus canicula (Small-spotted catshark) protein is NADH-ubiquinone oxidoreductase chain 2 (MT-ND2).